A 138-amino-acid polypeptide reads, in one-letter code: Ribulose bisphosphate carboxylase small subunit (138 aa).

This sequence belongs to the RuBisCO small chain family. As to quaternary structure, heterohexadecamer of 8 large and 8 small subunits.

The protein localises to the plastid. Its subcellular location is the chloroplast. Functionally, ruBisCO catalyzes two reactions: the carboxylation of D-ribulose 1,5-bisphosphate, the primary event in carbon dioxide fixation, as well as the oxidative fragmentation of the pentose substrate in the photorespiration process. Both reactions occur simultaneously and in competition at the same active site. Although the small subunit is not catalytic it is essential for maximal activity. In Pyropia suborbiculata (Red alga), this protein is Ribulose bisphosphate carboxylase small subunit.